Consider the following 390-residue polypeptide: 2-deoxy-scyllo-inosose synthase (390 aa).

NAD(+)-binding positions include Asp-42, 73 to 76 (EQNK), 105 to 109 (GVTGN), 129 to 130 (TT), 140 to 142 (SLK), and 151 to 152 (KN). Lys-142 is an active-site residue. Glu-184 lines the Co(2+) pocket. Glu-244 is an active-site residue. Residues His-247 and His-263 each contribute to the Co(2+) site. The segment at 371–390 (PPRPAAARTDDAATVLGGAG) is disordered.

This sequence belongs to the sugar phosphate cyclases superfamily. DOI synthase family. The cofactor is NAD(+). Requires Co(2+) as cofactor.

The enzyme catalyses D-glucose 6-phosphate = 2-deoxy-L-scyllo-inosose + phosphate. Its pathway is metabolic intermediate biosynthesis; 2-deoxystreptamine biosynthesis; 2-deoxystreptamine from D-glucose 6-phosphate: step 1/4. It functions in the pathway antibiotic biosynthesis; kanamycin biosynthesis. Its function is as follows. Catalyzes the intramolecular carbocycle formation from D-glucose-6-phosphate to 2-deoxy-scyllo-inosose (DOI). This chain is 2-deoxy-scyllo-inosose synthase (kanC), found in Streptomyces kanamyceticus.